A 643-amino-acid polypeptide reads, in one-letter code: Carboxy-terminal kinesin 2 (643 aa).

2 disordered regions span residues Met-1 to Glu-42 and Met-81 to Val-101. Positions Met-1–Lys-116 are globular. Residues Pro-88 to Val-101 are compositionally biased toward polar residues. Residues Lys-117–Arg-296 are a coiled coil. A Kinesin motor domain is found at Asn-294 to Cys-633. Residue Gly-386–Thr-393 coordinates ATP.

It belongs to the TRAFAC class myosin-kinesin ATPase superfamily. Kinesin family. NCD subfamily.

It localises to the cytoplasm. The protein localises to the cytoskeleton. Its function is as follows. Promotes mitotic spindle assembly. The sequence is that of Carboxy-terminal kinesin 2 from Xenopus laevis (African clawed frog).